The primary structure comprises 344 residues: Neurotrimin (344 aa).

The signal sequence occupies residues 1–33 (MGVCGYLFLPWKCLVVVSLRLLFLVPTGVPVRS). Ig-like C2-type domains are found at residues 39 to 126 (PKAM…PKTS), 136 to 218 (PKIV…VKVT), and 222 to 309 (PPYI…ASIM). N44, N70, and N152 each carry an N-linked (GlcNAc...) asparagine glycan. A disulfide bridge connects residues C57 and C115. 2 disulfides stabilise this stretch: C157–C201 and C243–C295. N284, N292, and N305 each carry an N-linked (GlcNAc...) asparagine glycan. N321 carries GPI-anchor amidated asparagine; alternate lipidation. Residue N321 is glycosylated (N-linked (GlcNAc...) asparagine; alternate). The propeptide at 322–344 (GTSRRAGCIWLLPLLVLHLLLKF) is removed in mature form.

The protein belongs to the immunoglobulin superfamily. IgLON family.

It localises to the cell membrane. Functionally, neural cell adhesion molecule. This is Neurotrimin (Ntm) from Mus musculus (Mouse).